We begin with the raw amino-acid sequence, 238 residues long: tRNA (guanine-N(7)-)-methyltransferase (238 aa).

The S-adenosyl-L-methionine site is built by Glu-68, Glu-93, Asp-120, and Asp-143. The active site involves Asp-143. Residues Lys-147, Asp-179, and 216 to 219 (TKFE) each bind substrate.

This sequence belongs to the class I-like SAM-binding methyltransferase superfamily. TrmB family.

The catalysed reaction is guanosine(46) in tRNA + S-adenosyl-L-methionine = N(7)-methylguanosine(46) in tRNA + S-adenosyl-L-homocysteine. It participates in tRNA modification; N(7)-methylguanine-tRNA biosynthesis. In terms of biological role, catalyzes the formation of N(7)-methylguanine at position 46 (m7G46) in tRNA. This chain is tRNA (guanine-N(7)-)-methyltransferase, found in Shewanella amazonensis (strain ATCC BAA-1098 / SB2B).